A 314-amino-acid chain; its full sequence is 4-hydroxy-3-methylbut-2-enyl diphosphate reductase (314 aa).

Residue C12 coordinates [4Fe-4S] cluster. Residues H41 and H74 each contribute to the (2E)-4-hydroxy-3-methylbut-2-enyl diphosphate site. Dimethylallyl diphosphate contacts are provided by H41 and H74. Residues H41 and H74 each contribute to the isopentenyl diphosphate site. Residue C96 participates in [4Fe-4S] cluster binding. H124 serves as a coordination point for (2E)-4-hydroxy-3-methylbut-2-enyl diphosphate. A dimethylallyl diphosphate-binding site is contributed by H124. Residue H124 coordinates isopentenyl diphosphate. The active-site Proton donor is the E126. T167 serves as a coordination point for (2E)-4-hydroxy-3-methylbut-2-enyl diphosphate. C197 contributes to the [4Fe-4S] cluster binding site. (2E)-4-hydroxy-3-methylbut-2-enyl diphosphate-binding residues include S225, S226, N227, and S269. Dimethylallyl diphosphate contacts are provided by S225, S226, N227, and S269. Residues S225, S226, N227, and S269 each contribute to the isopentenyl diphosphate site.

Belongs to the IspH family. [4Fe-4S] cluster serves as cofactor.

The enzyme catalyses isopentenyl diphosphate + 2 oxidized [2Fe-2S]-[ferredoxin] + H2O = (2E)-4-hydroxy-3-methylbut-2-enyl diphosphate + 2 reduced [2Fe-2S]-[ferredoxin] + 2 H(+). It carries out the reaction dimethylallyl diphosphate + 2 oxidized [2Fe-2S]-[ferredoxin] + H2O = (2E)-4-hydroxy-3-methylbut-2-enyl diphosphate + 2 reduced [2Fe-2S]-[ferredoxin] + 2 H(+). It participates in isoprenoid biosynthesis; dimethylallyl diphosphate biosynthesis; dimethylallyl diphosphate from (2E)-4-hydroxy-3-methylbutenyl diphosphate: step 1/1. It functions in the pathway isoprenoid biosynthesis; isopentenyl diphosphate biosynthesis via DXP pathway; isopentenyl diphosphate from 1-deoxy-D-xylulose 5-phosphate: step 6/6. Functionally, catalyzes the conversion of 1-hydroxy-2-methyl-2-(E)-butenyl 4-diphosphate (HMBPP) into a mixture of isopentenyl diphosphate (IPP) and dimethylallyl diphosphate (DMAPP). Acts in the terminal step of the DOXP/MEP pathway for isoprenoid precursor biosynthesis. The sequence is that of 4-hydroxy-3-methylbut-2-enyl diphosphate reductase from Idiomarina loihiensis (strain ATCC BAA-735 / DSM 15497 / L2-TR).